The primary structure comprises 432 residues: Phytase AppA (432 aa).

The signal sequence occupies residues methionine 1–alanine 22. Arginine 38 is a 1D-myo-inositol hexakisphosphate binding site. Residue histidine 39 is the Nucleophile of the active site. Residues arginine 42–lysine 46 and arginine 114 contribute to the 1D-myo-inositol hexakisphosphate site. 4 disulfides stabilise this stretch: cysteine 99/cysteine 130, cysteine 155/cysteine 430, cysteine 200/cysteine 210, and cysteine 404/cysteine 413. Residues arginine 289 and histidine 325–threonine 327 contribute to the 1D-myo-inositol hexakisphosphate site. Aspartate 326 functions as the Proton donor in the catalytic mechanism.

The protein belongs to the histidine acid phosphatase family. In terms of assembly, monomer.

It localises to the periplasm. It catalyses the reaction 1D-myo-inositol hexakisphosphate + H2O = 1D-myo-inositol 1,2,3,4,5-pentakisphosphate + phosphate. The catalysed reaction is 1D-myo-inositol 1,2,3,4,5-pentakisphosphate + H2O = 1D-myo-inositol 2,3,4,5-tetrakisphosphate + phosphate. It carries out the reaction 1D-myo-inositol 2,3,4,5-tetrakisphosphate + H2O = 1D-myo-inositol 2,4,5-triphosphate + phosphate. The enzyme catalyses 1D-myo-inositol 2,4,5-triphosphate + H2O = 1D-myo-inositol 2,5-bisphosphate + phosphate. It catalyses the reaction 1D-myo-inositol 2,5-bisphosphate + H2O = 1D-myo-inositol 2-phosphate + phosphate. The catalysed reaction is GTP + H2O = GDP + phosphate + H(+). With respect to regulation, contains three consecutive and one non-consecutive disulfide bonds and shows a strong dependence on DsbC for its full activity. Competitively inhibited by tartaric acid and by sodium fluorid. In terms of biological role, catalyzes the hydrolysis of phytate (or myo-inositol hexakisphosphate, an indigestible organic form of phosphorus that is found in many plant tissues) to myo-inositol and inorganic phosphate. Dephosphorylates phytate in a stereospecific way by sequential removal of phosphate groups to produce myo-inositol 2-monophosphate. Also shows phosphoanhydride phosphatase activity and hydrolyzes the distal phosphoryl residues of GTP, the 5'-beta-phosphoryl residue of the regulatory nucleotide ppGpp and tripolyphosphates. Does not split most phosphomonoesters with the exception of the synthetic substrate p-nitrophenyl phosphate (pNPP), 2,3-bisphosphoglycerate and fructose 1,6-bisphosphate. This chain is Phytase AppA, found in Escherichia coli (strain K12).